The sequence spans 99 residues: Protein MOST-1 (99 aa).

In terms of assembly, interacts with TSPO, IGHM and IGHD. In terms of tissue distribution, expressed in the heart, kidney, liver, pancreas, small intestine, ovary, testis, prostate and thymus. Expressed in all of the cancer cell lines tested.

The protein resides in the cytoplasm. Its subcellular location is the microsome membrane. It localises to the endoplasmic reticulum membrane. May be involved in cell survival, proliferation and progression of cancer cells. In Homo sapiens (Human), this protein is Protein MOST-1 (C8orf17).